The chain runs to 102 residues: Small ribosomal subunit protein uS10 (102 aa).

It belongs to the universal ribosomal protein uS10 family. Part of the 30S ribosomal subunit.

In terms of biological role, involved in the binding of tRNA to the ribosomes. The sequence is that of Small ribosomal subunit protein uS10 from Nitrosospira multiformis (strain ATCC 25196 / NCIMB 11849 / C 71).